Consider the following 436-residue polypeptide: Serine--tRNA ligase (436 aa).

239–241 (TAE) is an L-serine binding site. 270-272 (RLE) serves as a coordination point for ATP. Glu-293 contacts L-serine. Position 357-360 (357-360 (EISS)) interacts with ATP. Ser-393 lines the L-serine pocket.

It belongs to the class-II aminoacyl-tRNA synthetase family. Type-1 seryl-tRNA synthetase subfamily. In terms of assembly, homodimer. The tRNA molecule binds across the dimer.

The protein resides in the cytoplasm. It catalyses the reaction tRNA(Ser) + L-serine + ATP = L-seryl-tRNA(Ser) + AMP + diphosphate + H(+). The catalysed reaction is tRNA(Sec) + L-serine + ATP = L-seryl-tRNA(Sec) + AMP + diphosphate + H(+). Its pathway is aminoacyl-tRNA biosynthesis; selenocysteinyl-tRNA(Sec) biosynthesis; L-seryl-tRNA(Sec) from L-serine and tRNA(Sec): step 1/1. In terms of biological role, catalyzes the attachment of serine to tRNA(Ser). Is also able to aminoacylate tRNA(Sec) with serine, to form the misacylated tRNA L-seryl-tRNA(Sec), which will be further converted into selenocysteinyl-tRNA(Sec). The protein is Serine--tRNA ligase of Blochmanniella floridana.